Reading from the N-terminus, the 160-residue chain is SsrA-binding protein (160 aa).

It belongs to the SmpB family.

It is found in the cytoplasm. Its function is as follows. Required for rescue of stalled ribosomes mediated by trans-translation. Binds to transfer-messenger RNA (tmRNA), required for stable association of tmRNA with ribosomes. tmRNA and SmpB together mimic tRNA shape, replacing the anticodon stem-loop with SmpB. tmRNA is encoded by the ssrA gene; the 2 termini fold to resemble tRNA(Ala) and it encodes a 'tag peptide', a short internal open reading frame. During trans-translation Ala-aminoacylated tmRNA acts like a tRNA, entering the A-site of stalled ribosomes, displacing the stalled mRNA. The ribosome then switches to translate the ORF on the tmRNA; the nascent peptide is terminated with the 'tag peptide' encoded by the tmRNA and targeted for degradation. The ribosome is freed to recommence translation, which seems to be the essential function of trans-translation. This is SsrA-binding protein from Pectobacterium atrosepticum (strain SCRI 1043 / ATCC BAA-672) (Erwinia carotovora subsp. atroseptica).